A 134-amino-acid chain; its full sequence is Arsenate reductase (134 aa).

Active-site nucleophile residues include Cys11, Cys83, and Cys90. 2 cysteine pairs are disulfide-bonded: Cys11/Cys83 and Cys83/Cys90.

It belongs to the low molecular weight phosphotyrosine protein phosphatase family. Thioredoxin-coupled ArsC subfamily.

The protein localises to the cytoplasm. It catalyses the reaction arsenate + [thioredoxin]-dithiol + H(+) = arsenite + [thioredoxin]-disulfide + H2O. Its function is as follows. Catalyzes the reduction of arsenate [As(V)] to arsenite [As(III)]. In Bacillus anthracis (strain A0248), this protein is Arsenate reductase.